A 351-amino-acid polypeptide reads, in one-letter code: 3-hydroxy-4-methyl-anthranilyl-[aryl-carrier protein] 5-monooxygenase (351 aa).

It belongs to the aromatic-ring hydroxylase family. Requires FAD as cofactor.

The enzyme catalyses 3-hydroxy-4-methylanthranilyl-[aryl-carrier protein] + NADH + O2 + H(+) = 3,5-dihydroxy-4-methylanthranilyl-[aryl-carrier protein] + NAD(+) + H2O. It functions in the pathway antibiotic biosynthesis. Involved in the biosynthesis of the antitumor antibiotic sibiromycin. Hydroxylates the C5 position of the peptidyl carrier protein (PCP)-bound 4-methyl-3-hydroxyanthranilic acid (4-MHA or 3H4MAA), leading to the formation of the fully substituted anthranilate moiety found in sibiromycin. The chain is 3-hydroxy-4-methyl-anthranilyl-[aryl-carrier protein] 5-monooxygenase from Streptosporangium sibiricum.